The chain runs to 404 residues: uncharacterized protein (404 aa).

Polar residues predominate over residues 262–278; it reads VSTGDTSPYGTEDSSPA. Disordered regions lie at residues 262-307 and 320-340; these read VSTG…SPSL and KKSH…GGAD. Residues Ser-268, Ser-276, and Ser-279 each carry the phosphoserine modification. Phosphothreonine occurs at positions 290 and 293. A phosphoserine mark is found at Ser-304, Ser-306, Ser-324, Ser-358, and Ser-362. Residues 320–336 are compositionally biased toward basic and acidic residues; the sequence is KKSHSANDSEEFFREDD.

This is an uncharacterized protein from Rattus norvegicus (Rat).